The chain runs to 388 residues: Succinate--CoA ligase [ADP-forming] subunit beta (388 aa).

One can recognise an ATP-grasp domain in the interval lysine 9 to glutamine 244. Residues lysine 46, glycine 53–glycine 55, glutamate 99, threonine 102, and glutamate 107 each bind ATP. Positions 199 and 213 each coordinate Mg(2+). Residues asparagine 264 and glycine 321–valine 323 contribute to the substrate site.

It belongs to the succinate/malate CoA ligase beta subunit family. As to quaternary structure, heterotetramer of two alpha and two beta subunits. It depends on Mg(2+) as a cofactor.

The enzyme catalyses succinate + ATP + CoA = succinyl-CoA + ADP + phosphate. The catalysed reaction is GTP + succinate + CoA = succinyl-CoA + GDP + phosphate. It functions in the pathway carbohydrate metabolism; tricarboxylic acid cycle; succinate from succinyl-CoA (ligase route): step 1/1. In terms of biological role, succinyl-CoA synthetase functions in the citric acid cycle (TCA), coupling the hydrolysis of succinyl-CoA to the synthesis of either ATP or GTP and thus represents the only step of substrate-level phosphorylation in the TCA. The beta subunit provides nucleotide specificity of the enzyme and binds the substrate succinate, while the binding sites for coenzyme A and phosphate are found in the alpha subunit. The chain is Succinate--CoA ligase [ADP-forming] subunit beta from Enterobacter sp. (strain 638).